Here is a 283-residue protein sequence, read N- to C-terminus: ATP phosphoribosyltransferase (283 aa).

Belongs to the ATP phosphoribosyltransferase family. Long subfamily. Mg(2+) serves as cofactor.

The protein localises to the cytoplasm. The catalysed reaction is 1-(5-phospho-beta-D-ribosyl)-ATP + diphosphate = 5-phospho-alpha-D-ribose 1-diphosphate + ATP. It participates in amino-acid biosynthesis; L-histidine biosynthesis; L-histidine from 5-phospho-alpha-D-ribose 1-diphosphate: step 1/9. Its activity is regulated as follows. Feedback inhibited by histidine. Functionally, catalyzes the condensation of ATP and 5-phosphoribose 1-diphosphate to form N'-(5'-phosphoribosyl)-ATP (PR-ATP). Has a crucial role in the pathway because the rate of histidine biosynthesis seems to be controlled primarily by regulation of HisG enzymatic activity. This is ATP phosphoribosyltransferase from Rhodococcus erythropolis (strain PR4 / NBRC 100887).